The following is a 375-amino-acid chain: Succinyl-diaminopimelate desuccinylase (375 aa).

H66 contributes to the Zn(2+) binding site. The active site involves D68. Residue D99 coordinates Zn(2+). Residue E133 is the Proton acceptor of the active site. Zn(2+)-binding residues include E134, E162, and H348.

This sequence belongs to the peptidase M20A family. DapE subfamily. In terms of assembly, homodimer. Requires Zn(2+) as cofactor. The cofactor is Co(2+).

It catalyses the reaction N-succinyl-(2S,6S)-2,6-diaminopimelate + H2O = (2S,6S)-2,6-diaminopimelate + succinate. It participates in amino-acid biosynthesis; L-lysine biosynthesis via DAP pathway; LL-2,6-diaminopimelate from (S)-tetrahydrodipicolinate (succinylase route): step 3/3. Its function is as follows. Catalyzes the hydrolysis of N-succinyl-L,L-diaminopimelic acid (SDAP), forming succinate and LL-2,6-diaminopimelate (DAP), an intermediate involved in the bacterial biosynthesis of lysine and meso-diaminopimelic acid, an essential component of bacterial cell walls. This chain is Succinyl-diaminopimelate desuccinylase, found in Teredinibacter turnerae (strain ATCC 39867 / T7901).